The sequence spans 311 residues: tRNA(Ile)-lysidine synthase (311 aa).

31–36 (SGGKDS) is a binding site for ATP.

The protein belongs to the tRNA(Ile)-lysidine synthase family.

The protein localises to the cytoplasm. The enzyme catalyses cytidine(34) in tRNA(Ile2) + L-lysine + ATP = lysidine(34) in tRNA(Ile2) + AMP + diphosphate + H(+). Functionally, ligates lysine onto the cytidine present at position 34 of the AUA codon-specific tRNA(Ile) that contains the anticodon CAU, in an ATP-dependent manner. Cytidine is converted to lysidine, thus changing the amino acid specificity of the tRNA from methionine to isoleucine. The chain is tRNA(Ile)-lysidine synthase from Petrotoga mobilis (strain DSM 10674 / SJ95).